A 285-amino-acid chain; its full sequence is MTGTTARRTVVSVAVSAALACVTACTGPGGSDDAGHSTGPTGSARPSASAPASSRAPALTGPSADALRKVERATGRAGSARVESTTVMGRELSLEAAGALGWDDGLTGTLTITYTGGTTAETMRRLGTTAMEARYLPDAYYARMGDEFAERVGGRHWIKYVYEDLEDLGGGAGAGFADQMRNTTPNQAVKLLLSAQDVRRVGEETTRGRRTTHWSGTMGGATAQSVDIWVDDRDLLVKKVERGRTETGELTQTAYYSDYGVRVLAERPPAADTADFKELLASQGS.

The N-terminal stretch at 1–20 (MTGTTARRTVVSVAVSAALA) is a signal peptide. Residue C21 is the site of N-palmitoyl cysteine attachment. C21 is lipidated: S-diacylglycerol cysteine. Residues 27 to 63 (GPGGSDDAGHSTGPTGSARPSASAPASSRAPALTGPS) are disordered. The span at 43–58 (SARPSASAPASSRAPA) shows a compositional bias: low complexity.

It is found in the cell membrane. The sequence is that of Putative lipoprotein SCO4650 from Streptomyces coelicolor (strain ATCC BAA-471 / A3(2) / M145).